Reading from the N-terminus, the 111-residue chain is Colipase (111 aa).

Residues 1–16 form the signal peptide; sequence MKVLVLLLVTLAVVYA. A propeptide spans 17 to 21 (enterostatin, activation peptide); that stretch reads APDPR. Cystine bridges form between Cys33–Cys44, Cys39–Cys55, Cys43–Cys77, Cys65–Cys85, and Cys79–Cys103.

Belongs to the colipase family. Forms a 1:1 stoichiometric complex with pancreatic lipase. In terms of tissue distribution, expressed by the pancreas.

Its subcellular location is the secreted. In terms of biological role, colipase is a cofactor of pancreatic lipase. It allows the lipase to anchor itself to the lipid-water interface. Without colipase the enzyme is washed off by bile salts, which have an inhibitory effect on the lipase. Functionally, enterostatin has a biological activity as a satiety signal. This Ictidomys tridecemlineatus (Thirteen-lined ground squirrel) protein is Colipase (CLPS).